Here is a 288-residue protein sequence, read N- to C-terminus: MWQAISQQLSDTLLFEYQITEKVRLSGGDISESYMINDGEQRYFVKINDREFLHKFEVEAESLHLLRETSTIFVPEVVLVGKTKNNAFIILNYLPTKPLDDPENSFKFGQQLAQLHQWGEQKEFGFDTDNYLGSTLQPNQWHKKWCMFFAEQRIGWQLQLLKEKGVTLVDIDDFIDVVKQLLANHTPEPSLLHGDLWNGNVALTAFGPICFDPACYWGDRECDIAMTELFGGFQPEFYQGYESVMPLLPGYHERKDIYNLYHILNHCNLFGGHYLEQAQLTINKIISY.

ATP is bound at residue 92-94 (NYL). Asp-195 serves as the catalytic Proton acceptor.

Belongs to the fructosamine kinase family.

Its function is as follows. Ketoamine kinase that phosphorylates ketoamines on the third carbon of the sugar moiety to generate ketoamine 3-phosphate. The sequence is that of Probable ketoamine kinase VP1481 from Vibrio parahaemolyticus serotype O3:K6 (strain RIMD 2210633).